Here is a 400-residue protein sequence, read N- to C-terminus: Phosphoglycerate kinase (400 aa).

Substrate is bound by residues 21-23 (DFN), arginine 37, 60-63 (HFGR), arginine 119, and arginine 152. ATP is bound by residues lysine 205, glycine 296, glutamate 327, and 353 to 356 (GGDT).

It belongs to the phosphoglycerate kinase family. As to quaternary structure, monomer.

It is found in the cytoplasm. It carries out the reaction (2R)-3-phosphoglycerate + ATP = (2R)-3-phospho-glyceroyl phosphate + ADP. It participates in carbohydrate degradation; glycolysis; pyruvate from D-glyceraldehyde 3-phosphate: step 2/5. The protein is Phosphoglycerate kinase of Aliarcobacter butzleri (strain RM4018) (Arcobacter butzleri).